Consider the following 66-residue polypeptide: Protein I177L (66 aa).

An N-linked (GlcNAc...) asparagine; by host glycan is attached at Asn11.

Belongs to the asfivirus I177L family.

It is found in the virion. This Ornithodoros (relapsing fever ticks) protein is Protein I177L.